The chain runs to 64 residues: MPKIKTKKAAAKRFKKTGSGKVKHFHAFHSHLLGHKTSKRKRRLRKSAIVSKGDMKIIKKILPY.

Belongs to the bacterial ribosomal protein bL35 family.

This is Large ribosomal subunit protein bL35 from Carboxydothermus hydrogenoformans (strain ATCC BAA-161 / DSM 6008 / Z-2901).